A 404-amino-acid polypeptide reads, in one-letter code: tRNA N6-adenosine threonylcarbamoyltransferase, mitochondrial (404 aa).

A mitochondrion-targeting transit peptide spans 1-27; that stretch reads MFQSCLPGALRSWSRGVFSTSTRPRLV. 2 residues coordinate a divalent metal cation: His135 and His139. Substrate-binding positions include 157–161, Asp190, Gly210, Glu214, 317–318, and Thr345; these read LVSGG and SN. Asp346 is an a divalent metal cation binding site.

This sequence belongs to the KAE1 / TsaD family. In terms of assembly, monomer. A divalent metal cation is required as a cofactor.

Its subcellular location is the mitochondrion. It carries out the reaction L-threonylcarbamoyladenylate + adenosine(37) in tRNA = N(6)-L-threonylcarbamoyladenosine(37) in tRNA + AMP + H(+). In terms of biological role, required for the formation of a threonylcarbamoyl group on adenosine at position 37 (t(6)A37) in mitochondrial tRNAs that read codons beginning with adenine. Probably involved in the transfer of the threonylcarbamoyl moiety of threonylcarbamoyl-AMP (TC-AMP) to the N6 group of A37. Involved in mitochondrial genome maintenance. This chain is tRNA N6-adenosine threonylcarbamoyltransferase, mitochondrial, found in Danio rerio (Zebrafish).